The following is a 428-amino-acid chain: Gamma-glutamyl phosphate reductase (428 aa).

The protein belongs to the gamma-glutamyl phosphate reductase family.

The protein localises to the cytoplasm. The enzyme catalyses L-glutamate 5-semialdehyde + phosphate + NADP(+) = L-glutamyl 5-phosphate + NADPH + H(+). The protein operates within amino-acid biosynthesis; L-proline biosynthesis; L-glutamate 5-semialdehyde from L-glutamate: step 2/2. Functionally, catalyzes the NADPH-dependent reduction of L-glutamate 5-phosphate into L-glutamate 5-semialdehyde and phosphate. The product spontaneously undergoes cyclization to form 1-pyrroline-5-carboxylate. This chain is Gamma-glutamyl phosphate reductase, found in Anaeromyxobacter sp. (strain Fw109-5).